The chain runs to 206 residues: Protein FAM228A (206 aa).

This sequence belongs to the FAM228 family.

This chain is Protein FAM228A (FAM228A), found in Homo sapiens (Human).